The following is a 249-amino-acid chain: 3-deoxy-manno-octulosonate cytidylyltransferase (249 aa).

The protein belongs to the KdsB family.

The protein resides in the cytoplasm. It carries out the reaction 3-deoxy-alpha-D-manno-oct-2-ulosonate + CTP = CMP-3-deoxy-beta-D-manno-octulosonate + diphosphate. Its pathway is nucleotide-sugar biosynthesis; CMP-3-deoxy-D-manno-octulosonate biosynthesis; CMP-3-deoxy-D-manno-octulosonate from 3-deoxy-D-manno-octulosonate and CTP: step 1/1. It functions in the pathway bacterial outer membrane biogenesis; lipopolysaccharide biosynthesis. Its function is as follows. Activates KDO (a required 8-carbon sugar) for incorporation into bacterial lipopolysaccharide in Gram-negative bacteria. The sequence is that of 3-deoxy-manno-octulosonate cytidylyltransferase from Aliivibrio fischeri (strain ATCC 700601 / ES114) (Vibrio fischeri).